Consider the following 245-residue polypeptide: 1-(5-phosphoribosyl)-5-[(5-phosphoribosylamino)methylideneamino] imidazole-4-carboxamide isomerase (245 aa).

D8 acts as the Proton acceptor in catalysis. The active-site Proton donor is the D130.

Belongs to the HisA/HisF family.

The protein localises to the cytoplasm. It catalyses the reaction 1-(5-phospho-beta-D-ribosyl)-5-[(5-phospho-beta-D-ribosylamino)methylideneamino]imidazole-4-carboxamide = 5-[(5-phospho-1-deoxy-D-ribulos-1-ylimino)methylamino]-1-(5-phospho-beta-D-ribosyl)imidazole-4-carboxamide. It participates in amino-acid biosynthesis; L-histidine biosynthesis; L-histidine from 5-phospho-alpha-D-ribose 1-diphosphate: step 4/9. The sequence is that of 1-(5-phosphoribosyl)-5-[(5-phosphoribosylamino)methylideneamino] imidazole-4-carboxamide isomerase from Pseudomonas putida (strain W619).